Consider the following 653-residue polypeptide: Beta-galactosidase-1-like protein 3 (653 aa).

The active-site Proton donor is Glu-227. Glu-301 serves as the catalytic Nucleophile.

Belongs to the glycosyl hydrolase 35 family.

The sequence is that of Beta-galactosidase-1-like protein 3 (GLB1L3) from Homo sapiens (Human).